Here is a 494-residue protein sequence, read N- to C-terminus: tRNA-2-methylthio-N(6)-dimethylallyladenosine synthase (494 aa).

Residues Pro12–His131 enclose the MTTase N-terminal domain. [4Fe-4S] cluster contacts are provided by Cys21, Cys60, Cys94, Cys168, Cys172, and Cys175. In terms of domain architecture, Radical SAM core spans Arg154–Glu385. One can recognise a TRAM domain in the interval Lys387 to Leu457.

This sequence belongs to the methylthiotransferase family. MiaB subfamily. Monomer. [4Fe-4S] cluster serves as cofactor.

It localises to the cytoplasm. It carries out the reaction N(6)-dimethylallyladenosine(37) in tRNA + (sulfur carrier)-SH + AH2 + 2 S-adenosyl-L-methionine = 2-methylsulfanyl-N(6)-dimethylallyladenosine(37) in tRNA + (sulfur carrier)-H + 5'-deoxyadenosine + L-methionine + A + S-adenosyl-L-homocysteine + 2 H(+). In terms of biological role, catalyzes the methylthiolation of N6-(dimethylallyl)adenosine (i(6)A), leading to the formation of 2-methylthio-N6-(dimethylallyl)adenosine (ms(2)i(6)A) at position 37 in tRNAs that read codons beginning with uridine. This chain is tRNA-2-methylthio-N(6)-dimethylallyladenosine synthase, found in Cutibacterium acnes (strain DSM 16379 / KPA171202) (Propionibacterium acnes).